An 875-amino-acid chain; its full sequence is Lysine-specific demethylase 7A (875 aa).

The segment at 5–56 (PLYCVCRQPYDVNRFMIECDICKDWFHGSCVQVVEHHAADIDVYHCPNCEPI) adopts a PHD-type zinc-finger fold. The JmjC domain maps to 197 to 353 (FSDTRMSNLV…MQLRCYEMER (157 aa)). Residue threonine 246 coordinates substrate. Positions 249 and 251 each coordinate Fe cation. Lysine 266 is a substrate binding site. A Fe cation-binding site is contributed by histidine 321. Disordered regions lie at residues 442 to 506 (EDDS…SRKL), 629 to 710 (SQGE…NTDC), and 742 to 820 (QGNG…ATAK). Polar residues predominate over residues 448-462 (AVKTQGSAECSLSRS). Positions 478 to 505 (QDHHHHRRRHHHHHHHHHHHHHHHHSRK) are enriched in basic residues. Over residues 650–663 (SDSKAGDSAEKCSL) the composition is skewed to basic and acidic residues. Over residues 688–697 (SHRHSHHKQA) the composition is skewed to basic residues. The span at 742–762 (QGNGSSTSSSSDMWDSSEPCS) shows a compositional bias: low complexity.

Belongs to the JHDM1 histone demethylase family. JHDM1D subfamily. Fe(2+) is required as a cofactor. Predominantly expressed in brain.

The protein resides in the nucleus. Functionally, histone demethylase required for brain development. Specifically demethylates dimethylated 'Lys-9' and 'Lys-27' (H3K9me2 and H3K27me2, respectively) of histone H3 and monomethylated histone H4 'Lys-20' residue (H4K20Me1), thereby playing a central role in histone code. The chain is Lysine-specific demethylase 7A (kdm7a) from Danio rerio (Zebrafish).